A 689-amino-acid polypeptide reads, in one-letter code: Ataxin-1-like (689 aa).

Over residues methionine 1–leucine 19 the composition is skewed to basic and acidic residues. Disordered stretches follow at residues methionine 1 to serine 46, alanine 185 to alanine 223, and leucine 242 to glutamine 297. Positions proline 20–serine 197 are interaction with NCOR2 and ATXN1. The segment at proline 20 to serine 197 is self-association. 2 stretches are compositionally biased toward polar residues: residues arginine 28–serine 43 and lysine 200–proline 219. The span at glutamine 257–alanine 268 shows a compositional bias: low complexity. Positions arginine 273–glutamate 285 are enriched in basic and acidic residues. Residue serine 284 is modified to Phosphoserine. Residue threonine 330 is modified to Phosphothreonine. Positions lysine 357–lysine 405 are disordered. The residue at position 361 (serine 361) is a Phosphoserine. One can recognise an AXH domain in the interval proline 457 to asparagine 588. Serine 615 is subject to Phosphoserine. Residues glutamate 617–cysteine 647 are disordered.

Belongs to the ATXN1 family. As to quaternary structure, homodimer. Interacts with CIC. Interacts (via AXH domain) with NCOR2. Interacts with ATXN1. Directly interacts with RBPJ; this interaction is disrupted in the presence of Notch intracellular domain. Competes with ATXN1 for RBPJ-binding. Found in a complex with CIC and ATXN1. In terms of tissue distribution, expressed in cerebellum and cerebral cortex.

Its subcellular location is the nucleus. It is found in the cell projection. The protein localises to the dendrite. Functionally, chromatin-binding factor that repress Notch signaling in the absence of Notch intracellular domain by acting as a CBF1 corepressor. Binds to the HEY promoter and might assist, along with NCOR2, RBPJ-mediated repression. Can suppress ATXN1 cytotoxicity in spinocerebellar ataxia type 1 (SCA1). In concert with CIC and ATXN1, involved in brain development. The sequence is that of Ataxin-1-like (ATXN1L) from Homo sapiens (Human).